A 287-amino-acid polypeptide reads, in one-letter code: Probable endoribonuclease YicC (287 aa).

The protein belongs to the YicC/YloC family. Requires a divalent metal cation as cofactor.

Functionally, probably a ssRNA endonuclease. In terms of biological role, might contribute to small RNA (sRNA) regulation. This chain is Probable endoribonuclease YicC, found in Salmonella typhimurium (strain LT2 / SGSC1412 / ATCC 700720).